The following is a 403-amino-acid chain: Sex hormone-binding globulin (403 aa).

The first 30 residues, 1–30, serve as a signal peptide directing secretion; the sequence is MEKGEVASLRCRLLLLLLLLTLPPTHQGRT. 2 Laminin G-like domains span residues 46 to 218 and 225 to 391; these read KYLS…LGNC and GLFF…THSC. Residues C194 and C218 are joined by a disulfide bond. N274 is a glycosylation site (N-linked (GlcNAc...) asparagine). A disulfide bridge links C363 with C391. N-linked (GlcNAc...) asparagine glycosylation occurs at N397.

Homodimer. As to expression, isoform 2 is only expressed in the liver.

It localises to the secreted. In terms of biological role, functions as an androgen transport protein, but may also be involved in receptor mediated processes. Each dimer binds one molecule of steroid. Specific for 5-alpha-dihydrotestosterone, testosterone, and 17-beta-estradiol. Regulates the plasma metabolic clearance rate of steroid hormones by controlling their plasma concentration. The protein is Sex hormone-binding globulin (Shbg) of Rattus norvegicus (Rat).